The primary structure comprises 102 residues: Large ribosomal subunit protein uL24 (102 aa).

Belongs to the universal ribosomal protein uL24 family. Part of the 50S ribosomal subunit.

Functionally, one of two assembly initiator proteins, it binds directly to the 5'-end of the 23S rRNA, where it nucleates assembly of the 50S subunit. In terms of biological role, one of the proteins that surrounds the polypeptide exit tunnel on the outside of the subunit. The chain is Large ribosomal subunit protein uL24 from Burkholderia ambifaria (strain ATCC BAA-244 / DSM 16087 / CCUG 44356 / LMG 19182 / AMMD) (Burkholderia cepacia (strain AMMD)).